Here is a 249-residue protein sequence, read N- to C-terminus: MADS-box transcription factor 18 (249 aa).

An MADS-box domain is found at 1–61; the sequence is MGRGPVQLRR…GKLYEFSSHS (61 aa). The region spanning 88–179 is the K-box domain; that stretch reads QENWGDEYGI…KLMETEKEKN (92 aa). The segment at 184-249 is disordered; that stretch reads NTNREEQNGA…PPWMLRTSHT (66 aa). Over residues 210-236 the composition is skewed to polar residues; sequence PTTNNSQSQPRGSGESEAQPSPAQAGN.

Widely expressed. Transcripts accumulate to higher levels in organs that retain meristematic characteristics: in the apical meristem and in the meristematic leaf primordia formed on its flank; in the developing panicle at the early stage of rachis-branch primordia differentiation; in the procambium of the rachis branches and in all floral organ primordia.

The protein resides in the nucleus. Its function is as follows. Probable transcription factor. The sequence is that of MADS-box transcription factor 18 (MADS18) from Oryza sativa subsp. indica (Rice).